We begin with the raw amino-acid sequence, 68 residues long: ATP synthase subunit c (68 aa).

Helical transmembrane passes span 4–24 and 45–65; these read IAAA…NGLI and IMFI…VIAF.

This sequence belongs to the ATPase C chain family. F-type ATPases have 2 components, F(1) - the catalytic core - and F(0) - the membrane proton channel. F(1) has five subunits: alpha(3), beta(3), gamma(1), delta(1), epsilon(1). F(0) has three main subunits: a(1), b(2) and c(10-14). The alpha and beta chains form an alternating ring which encloses part of the gamma chain. F(1) is attached to F(0) by a central stalk formed by the gamma and epsilon chains, while a peripheral stalk is formed by the delta and b chains.

The protein resides in the cell membrane. F(1)F(0) ATP synthase produces ATP from ADP in the presence of a proton or sodium gradient. F-type ATPases consist of two structural domains, F(1) containing the extramembraneous catalytic core and F(0) containing the membrane proton channel, linked together by a central stalk and a peripheral stalk. During catalysis, ATP synthesis in the catalytic domain of F(1) is coupled via a rotary mechanism of the central stalk subunits to proton translocation. In terms of biological role, key component of the F(0) channel; it plays a direct role in translocation across the membrane. A homomeric c-ring of between 10-14 subunits forms the central stalk rotor element with the F(1) delta and epsilon subunits. This is ATP synthase subunit c from Staphylococcus saprophyticus subsp. saprophyticus (strain ATCC 15305 / DSM 20229 / NCIMB 8711 / NCTC 7292 / S-41).